A 505-amino-acid chain; its full sequence is MAQVINTNSLSLLTQNNLNKSQSSLSSAIERLSSGLRINSAKDDAAGQAIANRFTSNIKGLTQASRNANDGISIAQTTEGALNEINNNLQRVRELSVQATNGTNSDSDLKSIQDEIQQRLEEIDRVSNQTQFNGVKVLSQDNQMKIQVGANDGETITIDLQKIDVKSLGLDGFNVNGPKEATVGDLKSSFKNVTGYDTYAAGADKYRVDINSGAVVTDAAAPDKVYVNAANGQLTTDDAENNTAVDLFKTTKSTAGTAEAKAIAGAIKGGKEGDTFDYKGVTFTIDTKTGDGGNGKVSTTINGEKVTLTVADIATGATNVNAATLQSSKNVYTSVVNGQFTFDDKTKNESAKLSDLEANNAVKGESKITVNGAEYTANATGDKITLAGKTMFIDKTASGVSTLINEDAAAAKKSTANPLASIDSALSKVDAVRSSLGAIQNRFDSAITNLGNTVTNLNSARSRIEDADYATEVSNMSKAQILQQAGTSVLAQANQVPQNVLSLLR.

This sequence belongs to the bacterial flagellin family.

The protein localises to the secreted. It is found in the bacterial flagellum. In terms of biological role, flagellin is the subunit protein which polymerizes to form the filaments of bacterial flagella. This chain is Flagellin (fliC), found in Salmonella moscow.